The following is a 417-amino-acid chain: D-inositol 3-phosphate glycosyltransferase (417 aa).

Residue His-15 participates in 1D-myo-inositol 3-phosphate binding. UDP-N-acetyl-alpha-D-glucosamine is bound by residues 21–22 (QP) and Gly-29. 1D-myo-inositol 3-phosphate contacts are provided by residues 26-31 (DAGGMN), Lys-84, Tyr-117, Thr-141, and Arg-161. Residues Arg-241, Lys-246, and Val-299 each coordinate UDP-N-acetyl-alpha-D-glucosamine. The Mg(2+) site is built by Tyr-308, Arg-309, and Ala-311. Glu-321 and Glu-329 together coordinate UDP-N-acetyl-alpha-D-glucosamine. Residue Thr-335 coordinates Mg(2+).

It belongs to the glycosyltransferase group 1 family. MshA subfamily. Homodimer.

It carries out the reaction 1D-myo-inositol 3-phosphate + UDP-N-acetyl-alpha-D-glucosamine = 1D-myo-inositol 2-acetamido-2-deoxy-alpha-D-glucopyranoside 3-phosphate + UDP + H(+). In terms of biological role, catalyzes the transfer of a N-acetyl-glucosamine moiety to 1D-myo-inositol 3-phosphate to produce 1D-myo-inositol 2-acetamido-2-deoxy-glucopyranoside 3-phosphate in the mycothiol biosynthesis pathway. The protein is D-inositol 3-phosphate glycosyltransferase of Xylanimonas cellulosilytica (strain DSM 15894 / JCM 12276 / CECT 5975 / KCTC 9989 / LMG 20990 / NBRC 107835 / XIL07).